The sequence spans 628 residues: Methionine--tRNA ligase (628 aa).

Residues 9 to 19 carry the 'HIGH' region motif; that stretch reads YYVNDVPHLGH. Zn(2+) is bound by residues cysteine 124, cysteine 127, cysteine 142, and cysteine 145. The short motif at 294–298 is the 'KMSKS' region element; it reads KMSKS. Position 297 (lysine 297) interacts with ATP. One can recognise a tRNA-binding domain in the interval 527–628; it reads DFAKIEIKVA…QLVQNGSLVG (102 aa).

The protein belongs to the class-I aminoacyl-tRNA synthetase family. MetG type 2A subfamily. Homodimer. Zn(2+) serves as cofactor.

The protein resides in the cytoplasm. It carries out the reaction tRNA(Met) + L-methionine + ATP = L-methionyl-tRNA(Met) + AMP + diphosphate. Functionally, is required not only for elongation of protein synthesis but also for the initiation of all mRNA translation through initiator tRNA(fMet) aminoacylation. This Campylobacter jejuni subsp. jejuni serotype O:2 (strain ATCC 700819 / NCTC 11168) protein is Methionine--tRNA ligase (metG).